The chain runs to 374 residues: Acid phosphatase-like protein XcAP-1 (374 aa).

Positions threonine 1 to alanine 17 are cleaved as a signal peptide. Residue valine 25 participates in serotonin binding. 3 cysteine pairs are disulfide-bonded: cysteine 144/cysteine 372, cysteine 165/cysteine 219, and cysteine 345/cysteine 349. Residues aspartate 245, aspartate 249, asparagine 271, and glutamine 283 each contribute to the serotonin site.

The protein belongs to the histidine acid phosphatase family.

Its subcellular location is the secreted. In terms of biological role, probably modulates blood feeding of fleas on vertebrate species by binding and sequestering different mediators involved in the host response. Binds biogenic amines: serotonin, adrenaline and noradrenaline. Binds leukotriene C4. Does not bind histamine, leukotriene B4, leukotriene D4, leukotriene E4, ADP, and stable analogs of thromboxane A2: U-46619 and cTXA2. The chain is Acid phosphatase-like protein XcAP-1 from Xenopsylla cheopis (Oriental rat flea).